Consider the following 470-residue polypeptide: STAADAEEKLMNHLLSPDRYNKLIRPAVNSSQLVSIELQVSLAQLISVNEREQIMTTNVWLNQEWIDYRLAWKPSDYEGINMLRIPAKHIWLPDIVLYNNADGTYEVSLYTNAIVQNNGSIRWLPPAIYKSACKIEVKHFPFDQQNCTLKFRSWTYDHTEIDMVLKTSMASMDDFTPSGEWDIVALPGRRTENPLDPNYVDVTYDFIIKRKPLFYTINLIIPCVLITSLAILVFYLPSDCGEKMTLCISVLLALTVFLLLISKIVPPTSLDVPLIGKYLMFTMVLVTFSIVTSVCVLNVHHRSPSTHTMPPWVKLVFLERLPAYLFMKRPENNSPRQKPANCKKTRAENLCMDPADFYKNSTYFVNTASAKKYDMKITDTLDNVSSHQDFRLRTGTKFSPEVQEAIDGVSFIAEHMKSDDNDQSVIEDWKYVAMVVDRLFLWIFVLVCVLGTVGLFLQPLFQNHIAATNP.

The signal sequence occupies residues 1 to 3; sequence STA. Over 4-216 the chain is Extracellular; sequence ADAEEKLMNH…IIKRKPLFYT (213 aa). Asparagine 29, asparagine 118, and asparagine 146 each carry an N-linked (GlcNAc...) asparagine glycan. The cysteines at positions 133 and 147 are disulfide-linked. The chain crosses the membrane as a helical span at residues 217–237; sequence INLIIPCVLITSLAILVFYLP. Over 238-245 the chain is Cytoplasmic; that stretch reads SDCGEKMT. Na(+) is bound at residue glutamate 242. A helical membrane pass occupies residues 246–266; sequence LCISVLLALTVFLLLISKIVP. Over 267-278 the chain is Extracellular; that stretch reads PTSLDVPLIGKY. A helical membrane pass occupies residues 279-299; it reads LMFTMVLVTFSIVTSVCVLNV. Residues 300 to 438 lie on the Cytoplasmic side of the membrane; that stretch reads HHRSPSTHTM…WKYVAMVVDR (139 aa). A helical transmembrane segment spans residues 439–459; it reads LFLWIFVLVCVLGTVGLFLQP. The Extracellular portion of the chain corresponds to 460-470; sequence LFQNHIAATNP.

This sequence belongs to the ligand-gated ion channel (TC 1.A.9) family. Acetylcholine receptor (TC 1.A.9.1) subfamily. Beta-4/CHRNB4 sub-subfamily. Neuronal AChR is composed of two different types of subunits: alpha and beta. CHRNB4/Beta-4 subunit can be combined to CHRNA2/alpha-2, CHRNA3/alpha-3 or CHRNA4/alpha-4, CHRNA5/alpha-5 and CHRNB3/beta-3 to give rise to functional receptors.

Its subcellular location is the synaptic cell membrane. The protein localises to the cell membrane. It carries out the reaction Ca(2+)(in) = Ca(2+)(out). The catalysed reaction is K(+)(in) = K(+)(out). It catalyses the reaction Na(+)(in) = Na(+)(out). With respect to regulation, activated by a myriad of ligands such as acetylcholine, cytisine, nicotine, choline and epibatidine. The heteropentamer CHRNA3:CHRNB4 activity is blocked by the alpha-conotoxin ImI and AuIB. Component of neuronal acetylcholine receptors (nAChRs) that function as pentameric, ligand-gated cation channels with high calcium permeability among other activities. nAChRs are excitatory neurotrasnmitter receptors formed by a collection of nAChR subunits known to mediate synaptic transmission in the nervous system and the neuromuscular junction. Each nAchR subunit confers differential attributes to channel properties, including activation, deactivation and desensitization kinetics, pH sensitivity, cation permeability, and binding to allosteric modulators. CHRNB4 forms heteropentameric neuronal acetylcholine receptors with CHRNA2, CHRNA3 and CHRNA4, as well as CHRNA5 and CHRNB3 as accesory subunits. CHRNA3:CHRNB4 being predominant in neurons of the autonomic ganglia, it is known as ganglionic nicotinic receptor. CHRNA3:CHRNB4 or CHRNA3:CHRNA5:CHRNB4 play also an important role in the habenulo-interpeduncular tract, modulating the mesolimbic dopamine system and affecting reward circuits and addiction. Hypothalamic CHRNA3:CHRNB4 nAChR activation by nicotine leads to activation of POMC neurons and a decrease in food intake. This Gallus gallus (Chicken) protein is Neuronal acetylcholine receptor subunit beta-4 (CHRNB4).